An 807-amino-acid chain; its full sequence is Glycerol-3-phosphate acyltransferase (807 aa).

Residues 305–310 (CHRSHM) carry the HXXXXD motif motif.

Belongs to the GPAT/DAPAT family.

It is found in the cell inner membrane. The enzyme catalyses sn-glycerol 3-phosphate + an acyl-CoA = a 1-acyl-sn-glycero-3-phosphate + CoA. The protein operates within phospholipid metabolism; CDP-diacylglycerol biosynthesis; CDP-diacylglycerol from sn-glycerol 3-phosphate: step 1/3. The protein is Glycerol-3-phosphate acyltransferase of Klebsiella pneumoniae subsp. pneumoniae (strain ATCC 700721 / MGH 78578).